The following is a 640-amino-acid chain: MPLSFERFQGEGVFGLSSSSFYSDSQKIWSNQDKTEAKQEDLGYVVGGFLPEPTSVLDALRSPSPLASYSSTTTTLSSSHGGGGTTVTNTTVTAGDDNNNNKCSQMGLDDLDGVLSASSPGQEQSILRLIMDPGSAFGVFDPGFGFGSGSGPVSAPVSDNSNLLCNFPFQEITNPAEALINPSNHCLFYNPPLSPPAKRFNSGSLHQPVFPLSDPDPGHDPVRRQHQFQFPFYHNNQQQQFPSSSSSTAVAMVPVPSPGMAGDDQSVIIEQLFNAAELIGTTGNNNGDHTVLAQGILARLNHHLNTSSNHKSPFQRAASHIAEALLSLIHNESSPPLITPENLILRIAAYRSFSETSPFLQFVNFTANQSILESCNESGFDRIHIIDFDVGYGGQWSSLMQELASGVGGRRRNRASSLKLTVFAPPPSTVSDEFELRFTEENLKTFAGEVKIPFEIELLSVELLLNPAYWPLSLRSSEKEAIAVNLPVNSVASGYLPLILRFLKQLSPNIVVCSDRGCDRNDAPFPNAVIHSLQYHTSLLESLDANQNQDDSSIERFWVQPSIEKLLMKRHRWIERSPPWRILFTQCGFSPASLSQMAEAQAECLLQRNPVRGFHVEKRQSSLVMCWQRKELVTVSAWKC.

2 stretches are compositionally biased toward low complexity: residues 68-79 and 86-98; these read SYSSTTTTLSSS and TVTNTTVTAGDDN. The tract at residues 68–98 is disordered; that stretch reads SYSSTTTTLSSSHGGGGTTVTNTTVTAGDDN. The GRAS domain maps to 259–639; the sequence is GMAGDDQSVI…KELVTVSAWK (381 aa). Positions 266-331 are leucine repeat I (LRI); sequence SVIIEQLFNA…AEALLSLIHN (66 aa). Residues 350–422 form a VHIID region; sequence YRSFSETSPF…NRASSLKLTV (73 aa). A VHIID motif is present at residues 383-387; sequence IHIID. Positions 438–470 are leucine repeat II (LRII); the sequence is FTEENLKTFAGEVKIPFEIELLSVELLLNPAYW. The tract at residues 480 to 565 is PFYRE; sequence EAIAVNLPVN…RFWVQPSIEK (86 aa). The interval 568–639 is SAW; that stretch reads MKRHRWIERS…KELVTVSAWK (72 aa).

The protein belongs to the GRAS family. Expressed in seedlings, roots, cotyledons, leaves and flowers.

Its subcellular location is the nucleus. In terms of biological role, probable transcription factor involved in plant development. This chain is Scarecrow-like protein 27 (SCL27), found in Arabidopsis thaliana (Mouse-ear cress).